A 631-amino-acid polypeptide reads, in one-letter code: Phosphomethylpyrimidine synthase (631 aa).

Substrate-binding positions include N239, M268, Y297, H333, 353–355 (SRG), 394–397 (DGLR), and E433. Residue H437 participates in Zn(2+) binding. Y460 is a binding site for substrate. Position 501 (H501) interacts with Zn(2+). Positions 581, 584, and 589 each coordinate [4Fe-4S] cluster.

Belongs to the ThiC family. Homodimer. The cofactor is [4Fe-4S] cluster.

The catalysed reaction is 5-amino-1-(5-phospho-beta-D-ribosyl)imidazole + S-adenosyl-L-methionine = 4-amino-2-methyl-5-(phosphooxymethyl)pyrimidine + CO + 5'-deoxyadenosine + formate + L-methionine + 3 H(+). Its pathway is cofactor biosynthesis; thiamine diphosphate biosynthesis. In terms of biological role, catalyzes the synthesis of the hydroxymethylpyrimidine phosphate (HMP-P) moiety of thiamine from aminoimidazole ribotide (AIR) in a radical S-adenosyl-L-methionine (SAM)-dependent reaction. This chain is Phosphomethylpyrimidine synthase, found in Escherichia coli O127:H6 (strain E2348/69 / EPEC).